Consider the following 101-residue polypeptide: Small ribosomal subunit protein uS14 (101 aa).

This sequence belongs to the universal ribosomal protein uS14 family. In terms of assembly, part of the 30S ribosomal subunit. Contacts proteins S3 and S10.

Binds 16S rRNA, required for the assembly of 30S particles and may also be responsible for determining the conformation of the 16S rRNA at the A site. The sequence is that of Small ribosomal subunit protein uS14 from Polaromonas sp. (strain JS666 / ATCC BAA-500).